The chain runs to 1379 residues: MEVLMAERINLVFHNKVLDRTAMKRLISRLIDHFGMAYTSHILDQVKTLGFQQATATSISLGIDDLLTIPSKGWLVQDAEQQSFIFEKYHHYGNVHAVEKLRQSIEIWYATSEYLRQEMNLNFRMTDPLNPVHLMYFSGARGNASQVHQLVGMRGLMSDPQGQMIDLPIQSNLREGLSLTEYIISCYGARKGVVDTAVRTSDAGYLTRRLVEVVQHIVVRRTDCGTARGISVSPHNGMMPERMFIQTLIGRVLADDIYIGPRCIATRNQNIGVGLVNRFLNFRAEPILIRTPLTCRSTSWICRLCYGRSPTHGDLVELGEAVGIIAGQSIGEPGTQLTLRTFHTGGVFTGGTAEHVRAPSNGKIRLNEDLVHPTRTRHGYPAFFCSIYLYVTIESQDILHHVKIPPKSFILVQNDQYVESEQVIAESRAGTSTFNYKEKVRKHIYSDSGGEMHWSTNVYHAPEFTYGNVHLLSKTSHLWILLGEPCHSSLVSTSIHRDQDQMSVQSLSVKRRSTSKLSETNDEANQEIASADFSGKKEDRIADFSDVNRSICTDHYNLVYPAILPILDENSSFFSNCLSKRRRNQFIIPLQSIQEHKNELMPCSSISMKTPPNANGIFWANSILAYFDDPRYRRNNSGSTKYGTLEMHSTVKKEDFIKYRGVNEFRQKMKVERFFFIPEEVHILPGSSSIMVRNHSLIGVDTQITLNLRSRVGGLVRVERKKKIIELKIFFGDIYFPGGADNISQHSGVLIPPGTERKTNYKESKKVKSWIDVQRITPSKKKFFVLVRPVVTYEIMDDITSATLFPPDLLQQRDNAQLRVVNYILHGTGKPIRGNYDTSIQLVRTCLVFKRNQDKKSYYSEAARASVVEIRTNYLIRHFLRIDFVKAPISYIGKRNDPLGLGLLADNGLDWTHKNPYSEARIHQNLNQNQGTIHTFLNRNKESQSLSILSSSNCSRMDPANGAKSNNVIQESKKEEYPILKISNSLGPLGTYPPIANCDSLNHLLTHNQILVTNYFKLDNVKPPFQVFKLKYYFIAENWKVCNYNPGSNLRLNVFDFHWNFLHHNSCAETSKIMSLGQFICQNVCIDKTRPPRKSGQVILVQVDSVVIRLAKPYLATPGATVHGLYGETFFGGDTVVTFNYEKSISGDITQGLPKVEQVLEVRSVDSISMNLEGRVEGWSKCITGILGIPWGFFIGAELTIVQSRISLVNKIQKVYRAQGVHIHNRHIEIIVRQITSKVLVSEDGMSNVFSPGELIGLLRAERTGRALEEPIHYRSVFLGITKASLNTQSFISEASFQETARVLSKAALGGRIDWLKGLKENVVLGGVIPAGTGFRGLVDPSKQYKTIPLKTNLFEGGMRDLLVHHRKLFDSFLNTSPS.

Residues Cys224, Cys295, Cys302, and Cys305 each contribute to the Zn(2+) site. Residues 503–524 (SVQSLSVKRRSTSKLSETNDEA) are disordered.

The protein belongs to the RNA polymerase beta' chain family. RpoC2 subfamily. As to quaternary structure, in plastids the minimal PEP RNA polymerase catalytic core is composed of four subunits: alpha, beta, beta', and beta''. When a (nuclear-encoded) sigma factor is associated with the core the holoenzyme is formed, which can initiate transcription. Zn(2+) serves as cofactor.

The protein resides in the plastid. It carries out the reaction RNA(n) + a ribonucleoside 5'-triphosphate = RNA(n+1) + diphosphate. DNA-dependent RNA polymerase catalyzes the transcription of DNA into RNA using the four ribonucleoside triphosphates as substrates. This Cuscuta exaltata (Tall dodder) protein is DNA-directed RNA polymerase subunit beta''.